A 170-amino-acid polypeptide reads, in one-letter code: Transmembrane protein 252 (170 aa).

Transmembrane regions (helical) follow at residues 8–28 (ILCA…AFFI) and 40–60 (LIAA…GIFW). A disordered region spans residues 112-147 (CPAEREASGIPPPLYTETGLEFQDGNDSHPEAPPSY).

The protein localises to the membrane. This is Transmembrane protein 252 (TMEM252) from Homo sapiens (Human).